The primary structure comprises 376 residues: Dihydroorotate dehydrogenase (quinone) (376 aa).

FMN is bound by residues 78 to 82 (AGFDK) and T102. K82 contributes to the substrate binding site. 127–131 (NRMGF) serves as a coordination point for substrate. Residues N157 and N190 each coordinate FMN. N190 serves as a coordination point for substrate. The Nucleophile role is filled by S193. Residue N195 participates in substrate binding. The FMN site is built by K228 and T256. 257-258 (NT) serves as a coordination point for substrate. Residues G286, G315, and 336 to 337 (YT) contribute to the FMN site.

It belongs to the dihydroorotate dehydrogenase family. Type 2 subfamily. Monomer. It depends on FMN as a cofactor.

It is found in the cell membrane. It catalyses the reaction (S)-dihydroorotate + a quinone = orotate + a quinol. It participates in pyrimidine metabolism; UMP biosynthesis via de novo pathway; orotate from (S)-dihydroorotate (quinone route): step 1/1. Its function is as follows. Catalyzes the conversion of dihydroorotate to orotate with quinone as electron acceptor. The protein is Dihydroorotate dehydrogenase (quinone) of Trichormus variabilis (strain ATCC 29413 / PCC 7937) (Anabaena variabilis).